The sequence spans 81 residues: Acyl carrier protein (81 aa).

The Carrier domain maps to 4–79; that stretch reads AEIKDKVYDI…QAIDYIVNKK (76 aa). S39 is subject to O-(pantetheine 4'-phosphoryl)serine.

The protein belongs to the acyl carrier protein (ACP) family. Post-translationally, 4'-phosphopantetheine is transferred from CoA to a specific serine of apo-ACP by AcpS. This modification is essential for activity because fatty acids are bound in thioester linkage to the sulfhydryl of the prosthetic group.

The protein localises to the cytoplasm. The protein operates within lipid metabolism; fatty acid biosynthesis. Its function is as follows. Carrier of the growing fatty acid chain in fatty acid biosynthesis. The sequence is that of Acyl carrier protein from Chlorobaculum tepidum (strain ATCC 49652 / DSM 12025 / NBRC 103806 / TLS) (Chlorobium tepidum).